We begin with the raw amino-acid sequence, 83 residues long: RNA-binding protein Hfq (83 aa).

Residues 11-71 (DVFLNYIRKN…ISTIMPASPV (61 aa)) enclose the Sm domain.

The protein belongs to the Hfq family. As to quaternary structure, homohexamer.

Its function is as follows. RNA chaperone that binds small regulatory RNA (sRNAs) and mRNAs to facilitate mRNA translational regulation in response to envelope stress, environmental stress and changes in metabolite concentrations. Also binds with high specificity to tRNAs. The chain is RNA-binding protein Hfq from Rhodospirillum rubrum (strain ATCC 11170 / ATH 1.1.1 / DSM 467 / LMG 4362 / NCIMB 8255 / S1).